The chain runs to 185 residues: Monothiol glutaredoxin-S4, mitochondrial (185 aa).

Residues 1–36 (MARLMSSALIRGLVRSSCSPTVAAVAQPTIHQFRNY) constitute a mitochondrion transit peptide. A disordered region spans residues 37–74 (SSGLGGDSTATGDSSSTRVAADPDTHQDFQPTTKSSNM). Residues 43–53 (DSTATGDSSST) are compositionally biased toward low complexity. Polar residues predominate over residues 64 to 74 (DFQPTTKSSNM). One can recognise a Glutaredoxin domain in the interval 77–179 (DDIVSQDIKE…DVLGDIAQKR (103 aa)). Residue lysine 94 coordinates glutathione. Cysteine 102 lines the [2Fe-2S] cluster pocket. Glutathione is bound by residues lysine 131, phenylalanine 143, and 156-157 (SD).

Belongs to the glutaredoxin family. CGFS subfamily.

It localises to the mitochondrion. In terms of biological role, may only reduce GSH-thiol disulfides, but not protein disulfides. The polypeptide is Monothiol glutaredoxin-S4, mitochondrial (GRXS4) (Oryza sativa subsp. japonica (Rice)).